Reading from the N-terminus, the 275-residue chain is Hydroxyethylthiazole kinase (275 aa).

Position 50 (methionine 50) interacts with substrate. The ATP site is built by arginine 126 and serine 171. Residue alanine 200 participates in substrate binding.

Belongs to the Thz kinase family. Mg(2+) serves as cofactor.

The catalysed reaction is 5-(2-hydroxyethyl)-4-methylthiazole + ATP = 4-methyl-5-(2-phosphooxyethyl)-thiazole + ADP + H(+). It participates in cofactor biosynthesis; thiamine diphosphate biosynthesis; 4-methyl-5-(2-phosphoethyl)-thiazole from 5-(2-hydroxyethyl)-4-methylthiazole: step 1/1. In terms of biological role, catalyzes the phosphorylation of the hydroxyl group of 4-methyl-5-beta-hydroxyethylthiazole (THZ). The chain is Hydroxyethylthiazole kinase from Acinetobacter baumannii (strain AB307-0294).